Reading from the N-terminus, the 37-residue chain is Large ribosomal subunit protein bL36 (37 aa).

This sequence belongs to the bacterial ribosomal protein bL36 family.

This is Large ribosomal subunit protein bL36 from Bifidobacterium adolescentis (strain ATCC 15703 / DSM 20083 / NCTC 11814 / E194a).